The sequence spans 239 residues: Fatty acid metabolism regulator protein (239 aa).

Residues 6-74 (QSPAGFAEEY…HGKPTKVNNF (69 aa)) enclose the HTH gntR-type domain. The segment at residues 34–53 (ERELSELIGVTRTTLREVLQ) is a DNA-binding region (H-T-H motif).

As to quaternary structure, homodimer.

The protein localises to the cytoplasm. Multifunctional regulator of fatty acid metabolism. In Escherichia fergusonii (strain ATCC 35469 / DSM 13698 / CCUG 18766 / IAM 14443 / JCM 21226 / LMG 7866 / NBRC 102419 / NCTC 12128 / CDC 0568-73), this protein is Fatty acid metabolism regulator protein.